The primary structure comprises 226 residues: uncharacterized protein (226 aa).

The protein belongs to the HisA/HisF family.

This is an uncharacterized protein from Methanocaldococcus jannaschii (strain ATCC 43067 / DSM 2661 / JAL-1 / JCM 10045 / NBRC 100440) (Methanococcus jannaschii).